The primary structure comprises 281 residues: MKNIGININTDKDISRNILDKIFQYIHEECSEAKIKVFYDSKGLDNEESRALDAVMVLGGDGTILGTARALAKYDVPIFGINRGHLGFLAEIELEDCKKAIKNLFKGQYKIEDRIMLKCDLKGIDKKDDFLALNDIVLTKGNLSRIVKYSIYVDDVWYTTFVADGVIVATPTGSTAYSLSAGGPIVYPDLDVLEIAPICPHSLGIRPILLNGNSKINIRVLKKYEDPVLTIDGQRYKKVTVNEVTISKSKYKCRLIKFKDKDYFKILRTKISYRSRECEGE.

The Proton acceptor role is filled by aspartate 61. NAD(+)-binding positions include 61-62 (DG), 134-135 (ND), arginine 145, aspartate 164, 175-180 (TAYSLS), and glutamine 234.

The protein belongs to the NAD kinase family. It depends on a divalent metal cation as a cofactor.

Its subcellular location is the cytoplasm. It carries out the reaction NAD(+) + ATP = ADP + NADP(+) + H(+). Functionally, involved in the regulation of the intracellular balance of NAD and NADP, and is a key enzyme in the biosynthesis of NADP. Catalyzes specifically the phosphorylation on 2'-hydroxyl of the adenosine moiety of NAD to yield NADP. The polypeptide is NAD kinase (Clostridium botulinum (strain 657 / Type Ba4)).